The primary structure comprises 234 residues: Small ribosomal subunit protein uS2 (234 aa).

This sequence belongs to the universal ribosomal protein uS2 family.

In Prochlorococcus marinus subsp. pastoris (strain CCMP1986 / NIES-2087 / MED4), this protein is Small ribosomal subunit protein uS2.